Here is a 309-residue protein sequence, read N- to C-terminus: Ribosomal RNA small subunit methyltransferase H (309 aa).

Residues 34–36, D54, F80, D102, and Q109 contribute to the S-adenosyl-L-methionine site; that span reads GGH.

This sequence belongs to the methyltransferase superfamily. RsmH family.

The protein resides in the cytoplasm. The enzyme catalyses cytidine(1402) in 16S rRNA + S-adenosyl-L-methionine = N(4)-methylcytidine(1402) in 16S rRNA + S-adenosyl-L-homocysteine + H(+). Its function is as follows. Specifically methylates the N4 position of cytidine in position 1402 (C1402) of 16S rRNA. This is Ribosomal RNA small subunit methyltransferase H from Cellvibrio japonicus (strain Ueda107) (Pseudomonas fluorescens subsp. cellulosa).